The chain runs to 775 residues: 5-methyltetrahydropteroyltriglutamate--homocysteine methyltransferase (775 aa).

5-methyltetrahydropteroyltri-L-glutamate is bound by residues 16–19 (REMK) and lysine 115. Residues 435–437 (IGS) and glutamate 488 each bind L-homocysteine. Residues 435-437 (IGS) and glutamate 488 each bind L-methionine. 5-methyltetrahydropteroyltri-L-glutamate-binding positions include 519–520 (RC) and tryptophan 565. Aspartate 603 is an L-homocysteine binding site. Position 603 (aspartate 603) interacts with L-methionine. Glutamate 609 is a 5-methyltetrahydropteroyltri-L-glutamate binding site. Zn(2+) contacts are provided by histidine 645, cysteine 647, and glutamate 669. Histidine 698 acts as the Proton donor in catalysis. Residue cysteine 730 coordinates Zn(2+).

Belongs to the vitamin-B12 independent methionine synthase family. Zn(2+) serves as cofactor.

It catalyses the reaction 5-methyltetrahydropteroyltri-L-glutamate + L-homocysteine = tetrahydropteroyltri-L-glutamate + L-methionine. It functions in the pathway amino-acid biosynthesis; L-methionine biosynthesis via de novo pathway; L-methionine from L-homocysteine (MetE route): step 1/1. Catalyzes the transfer of a methyl group from 5-methyltetrahydrofolate to homocysteine resulting in methionine formation. This Coxiella burnetii (strain RSA 331 / Henzerling II) protein is 5-methyltetrahydropteroyltriglutamate--homocysteine methyltransferase.